The chain runs to 792 residues: Glucocorticoid receptor (792 aa).

Positions 1 to 15 are enriched in basic and acidic residues; the sequence is MDSKESLAPPGRDEV. Positions 1-25 are disordered; it reads MDSKESLAPPGRDEVPSSLLGRGRG. The segment at 1 to 436 is modulating; the sequence is MDSKESLAPP…STATGPPPKL (436 aa). Arg-24 bears the Omega-N-methylarginine mark. Position 46 is a phosphoserine (Ser-46). The tract at residues 67-98 is disordered; sequence SKGSASNAQQQQQQQQQQQQQQQQQPQPDLSK. Over residues 75–94 the composition is skewed to low complexity; sequence QQQQQQQQQQQQQQQQQPQP. 3 positions are modified to phosphoserine: Ser-131, Ser-152, and Ser-159. Residues 148-162 are compositionally biased toward polar residues; that stretch reads NRSTSRPENPKSSTP. The segment at 148-201 is disordered; the sequence is NRSTSRPENPKSSTPAAGCATPTEKEFPQTHSDPSSEQQNRKSQPGTNGGSVKL. Thr-168 is subject to Phosphothreonine. Positions 176-193 are enriched in polar residues; it reads QTHSDPSSEQQNRKSQPG. Residues Ser-221, Ser-229, Ser-243, and Ser-284 each carry the phosphoserine modification. Residues Lys-294 and Lys-310 each participate in a glycyl lysine isopeptide (Lys-Gly) (interchain with G-Cter in SUMO); alternate cross-link. Glycyl lysine isopeptide (Lys-Gly) (interchain with G-Cter in SUMO2); alternate cross-links involve residues Lys-294 and Lys-310. Ser-324 and Ser-421 each carry phosphoserine. The segment at residues 434–509 is a DNA-binding region (nuclear receptor); the sequence is PKLCLVCSDE…AGMNLEARKT (76 aa). Lys-435 participates in a covalent cross-link: Glycyl lysine isopeptide (Lys-Gly) (interchain with G-Cter in ubiquitin). 2 consecutive NR C4-type zinc fingers follow at residues 437-457 and 473-497; these read CLVC…CGSC and CAGR…YRKC. Residues Lys-496, Lys-508, Lys-510, and Lys-511 each carry the N6-acetyllysine modification. Residues 501-792 are interaction with CLOCK; the sequence is GMNLEARKTK…NIKKLLFHQK (292 aa). The interval 503-538 is hinge; it reads NLEARKTKKKIKGIQQATAGVSQDTSENANKTIVPA. The 235-residue stretch at 539 to 773 folds into the NR LBD domain; it reads ALPQLTPTLV…FPEMLAEIIT (235 aa). The segment at 547–712 is interaction with CRY1; sequence LVSLLEVIEP…EIRMTYIKEL (166 aa). Lys-718 participates in a covalent cross-link: Glycyl lysine isopeptide (Lys-Gly) (interchain with G-Cter in SUMO).

Belongs to the nuclear hormone receptor family. NR3 subfamily. In terms of assembly, heteromultimeric cytoplasmic complex with HSP90AA1, HSPA1A/HSPA1B, and FKBP5 or another immunophilin such as PPID, STIP1, or the immunophilin homolog PPP5C. Upon ligand binding FKBP5 dissociates from the complex and FKBP4 takes its place, thereby linking the complex to dynein and mediating transport to the nucleus, where the complex dissociates. Probably forms a complex composed of chaperones HSP90 and HSP70, co-chaperones CDC37, PPP5C, TSC1 and client protein TSC2, CDK4, AKT, RAF1 and NR3C1; this complex does not contain co-chaperones STIP1/HOP and PTGES3/p23. Directly interacts with UNC45A. Binds to DNA as a homodimer, and as heterodimer with NR3C2 or the retinoid X receptor. Binds STAT5A and STAT5B homodimers and heterodimers. Interacts with NRIP1, POU2F1, POU2F2 and TRIM28. Interacts with several coactivator complexes, including the SMARCA4 complex, CREBBP/EP300, TADA2L (Ada complex) and p160 coactivators such as NCOA2 and NCOA6. Interaction with BAG1 inhibits transactivation. Interacts with HEXIM1 and TGFB1I1. Interacts with NCOA1. Interacts with NCOA3, SMARCA4, SMARCC1, SMARCD1, and SMARCE1. Interacts with CLOCK, CRY1 and CRY2 in a ligand-dependent fashion. Interacts with CIART. Interacts with RWDD3. Interacts with UBE2I/UBC9 and this interaction is enhanced in the presence of RWDD3. Interacts with GRIP1. Interacts with NR4A3 (via nuclear receptor DNA-binding domain), represses transcription activity of NR4A3 on the POMC promoter Nur response element (NurRE). Directly interacts with PNRC2 to attract and form a complex with UPF1 and DCP1A; the interaction leads to rapid mRNA degradation. Interacts with GSK3B. Interacts with FNIP1 and FNIP2. Interacts (via C-terminus) with HNRNPU (via C-terminus). Interacts with MCM3AP. Interacts (via domain NR LBD) with HSP90AA1 and HSP90AB1. In the absence of hormonal ligand, interacts with TACC1. Interacts (via NR LBD domain) with ZNF764 (via KRAB domain); the interaction regulates transcription factor activity of NR3C1 by directing its actions toward certain biologic pathways. Acetylation by CLOCK reduces its binding to glucocorticoid response elements and its transcriptional activity. Post-translationally, increased proteasome-mediated degradation in response to glucocorticoids. In terms of processing, phosphorylated in the absence of hormone; becomes hyperphosphorylated in the presence of glucocorticoids. Phosphorylated in the absence of hormone; becomes hyperphosphorylated in the presence of glucocorticoid. The Ser-221, Ser-243 and Ser-421-phosphorylated forms are mainly cytoplasmic, and the Ser-229-phosphorylated form is nuclear. Phosphorylation at Ser-229 increases transcriptional activity. Phosphorylation at Ser-221, Ser-243 and Ser-421 decreases signaling capacity. Phosphorylation at Ser-421 may protect from glucocorticoid-induced apoptosis. Phosphorylation at Ser-221 and Ser-229 is not required in regulation of chromosome segregation. May be dephosphorylated by PPP5C, attenuates NR3C1 action. Sumoylation at Lys-294 and Lys-310 negatively regulates its transcriptional activity. Sumoylation at Lys-718 positively regulates its transcriptional activity in the presence of RWDD3. Sumoylation at Lys-294 and Lys-310 is dispensable whereas sumoylation at Lys-718 is critical for the stimulatory effect of RWDD3 on its transcriptional activity. Heat shock increases sumoylation in a RWDD3-dependent manner. Post-translationally, ubiquitinated. Ubiquitination by UBR5 leads to its degradation: UBR5 specifically recognizes and binds ligand-bound NR3C1 when it is not associated with coactivators (NCOAs). In presence of NCOAs, the UBR5-degron is not accessible, preventing its ubiquitination and degradation. As to expression, expressed in spleen, kidney and liver. Expressed in a circadian manner in the liver. Expressed at highest level in spleen with lesser amounts in kidney and liver.

Its subcellular location is the cytoplasm. It localises to the nucleus. The protein localises to the mitochondrion. It is found in the cytoskeleton. The protein resides in the spindle. Its subcellular location is the microtubule organizing center. It localises to the centrosome. The protein localises to the chromosome. It is found in the nucleoplasm. Its function is as follows. Receptor for glucocorticoids (GC). Has a dual mode of action: as a transcription factor that binds to glucocorticoid response elements (GRE), both for nuclear and mitochondrial DNA, and as a modulator of other transcription factors. Affects inflammatory responses, cellular proliferation and differentiation in target tissues. Involved in chromatin remodeling. Plays a role in rapid mRNA degradation by binding to the 5' UTR of target mRNAs and interacting with PNRC2 in a ligand-dependent manner which recruits the RNA helicase UPF1 and the mRNA-decapping enzyme DCP1A, leading to RNA decay. Could act as a coactivator for STAT5-dependent transcription upon growth hormone (GH) stimulation and could reveal an essential role of hepatic GR in the control of body growth. Has transcriptional activation and repression activity. Mediates glucocorticoid-induced apoptosis. Promotes accurate chromosome segregation during mitosis. May act as a tumor suppressor. May play a negative role in adipogenesis through the regulation of lipolytic and antilipogenic gene expression. In terms of biological role, acts as a dominant negative inhibitor of isoform 1. Has intrinsic transcriptional activity independent of isoform Alpha when both isoforms are coexpressed. Loses this transcription modulator function on its own. Has no hormone-binding activity. May play a role in controlling glucose metabolism by maintaining insulin sensitivity. Reduces hepatic gluconeogenesis through down-regulation of PEPCK in an isoform Alpha-dependent manner. Directly regulates STAT1 expression in isoform Alpha-independent manner. The sequence is that of Glucocorticoid receptor (Nr3c1) from Mus musculus (Mouse).